Reading from the N-terminus, the 914-residue chain is UPF0182 protein PTH_1387 (914 aa).

Transmembrane regions (helical) follow at residues 7 to 27 (FAAYVLAGFGLIFLALTIAGA), 48 to 68 (IIISDLGLRLAVGLTFFVLLF), 109 to 129 (LLLLAFIALSALMAFLFNFTV), 173 to 193 (INWVILVSAFWVLAAYFVVYF), 209 to 229 (YHFSFLAAIFFGLKAAGYQLE), 252 to 272 (TLLAYKVLTYIALLCALAILI), and 281 to 301 (LVIYSIGVLLIASVLLGGIYP).

This sequence belongs to the UPF0182 family.

The protein localises to the cell membrane. This Pelotomaculum thermopropionicum (strain DSM 13744 / JCM 10971 / SI) protein is UPF0182 protein PTH_1387.